A 36-amino-acid polypeptide reads, in one-letter code: GLGRPSRECIEGSEPCEVFRPYTCCSGHCIIFVCAR.

A propeptide spanning residues 1 to 7 (GLGRPSR) is cleaved from the precursor. 3 disulfide bridges follow: cysteine 9-cysteine 25, cysteine 16-cysteine 29, and cysteine 24-cysteine 34.

Belongs to the conotoxin O1 superfamily. Expressed by the venom duct.

Its subcellular location is the secreted. Functionally, probable neurotoxin with unknown target. Possibly targets ion channels. The chain is Conotoxin Cal6.1h from Californiconus californicus (California cone).